The following is a 221-amino-acid chain: U1 small nuclear ribonucleoprotein C (221 aa).

The segment at 4-36 adopts a Matrin-type zinc-finger fold; it reads HYCDYCDVFLTHDSVSVRKAHNSGRNHLQNVRE. Residues 80 to 221 are disordered; that stretch reads GAGPLSGSSD…PHSRTGYGPR (142 aa). The span at 142–158 shows a compositional bias: pro residues; the sequence is YSRPPPQGGPYSRPPPD. Residues 178–190 show a composition bias toward low complexity; it reads PLGYGAPLPGAYP. Over residues 191–204 the composition is skewed to pro residues; it reads SGPPPNMRGPPPPL.

This sequence belongs to the U1 small nuclear ribonucleoprotein C family. As to quaternary structure, U1 snRNP is composed of the 7 core Sm proteins B/B', D1, D2, D3, E, F and G that assemble in a heptameric protein ring on the Sm site of the small nuclear RNA to form the core snRNP, and at least 3 U1 snRNP-specific proteins U1-70K, U1-A and U1-C. U1-C interacts with U1 snRNA and the 5' splice-site region of the pre-mRNA.

The protein resides in the nucleus. Its function is as follows. Component of the spliceosomal U1 snRNP, which is essential for recognition of the pre-mRNA 5' splice-site and the subsequent assembly of the spliceosome. U1-C is directly involved in initial 5' splice-site recognition for both constitutive and regulated alternative splicing. The interaction with the 5' splice-site seems to precede base-pairing between the pre-mRNA and the U1 snRNA. Stimulates commitment or early (E) complex formation by stabilizing the base pairing of the 5' end of the U1 snRNA and the 5' splice-site region. The sequence is that of U1 small nuclear ribonucleoprotein C from Mycosarcoma maydis (Corn smut fungus).